Here is a 147-residue protein sequence, read N- to C-terminus: Nudix hydrolase 1 (147 aa).

Residue S2 is modified to N-acetylserine. Residues 7-140 form the Nudix hydrolase domain; sequence IPRVAVVVFI…EKLFGSGFNP (134 aa). Residues 41–62 carry the Nudix box motif; the sequence is GHLEFGESFEECAAREVMEETG. Positions 56 and 60 each coordinate Mg(2+).

It belongs to the Nudix hydrolase family. As to quaternary structure, homodimer. It depends on Mg(2+) as a cofactor. Mn(2+) serves as cofactor. Expressed in roots, stems and leaves.

It is found in the cytoplasm. The enzyme catalyses 7,8-dihydroneopterin 3'-triphosphate + H2O = 7,8-dihydroneopterin 3'-phosphate + diphosphate + H(+). The catalysed reaction is NAD(+) + H2O = beta-nicotinamide D-ribonucleotide + AMP + 2 H(+). It carries out the reaction NADH + H2O = reduced beta-nicotinamide D-ribonucleotide + AMP + 2 H(+). It catalyses the reaction 8-oxo-dGTP + H2O = 8-oxo-dGMP + diphosphate + H(+). Functionally, mediates the hydrolysis of some nucleoside diphosphate derivatives. Its substrate specificity is unclear. In vitro, it can use NTP, dNTP, 8-oxo-GTP, 8-oxo-dGTP, dGTP, dATP, dTTP or dihydroneopterin triphosphate (DHNTP) as substrate. Has some NADH pyrophosphatase activity in vitro; however, such activity may not be relevant in vivo due to the high concentration of manganese used during the experiments. Plays an important role in protection against oxidative DNA and RNA damage by removing oxidatively damaged form of guanine. In Arabidopsis thaliana (Mouse-ear cress), this protein is Nudix hydrolase 1 (NUDT1).